Consider the following 746-residue polypeptide: Catalase-peroxidase (746 aa).

Positions 1 to 20 (MSSDTSSSRPPQPDSGTASK) are enriched in polar residues. The interval 1–42 (MSSDTSSSRPPQPDSGTASKSESENPAIPSPKPKAHAPLTNR) is disordered. A cross-link (tryptophyl-tyrosyl-methioninium (Trp-Tyr) (with M-262)) is located at residues 113–236 (WHAAGTYRIH…YGATTMGLIY (124 aa)). The Proton acceptor role is filled by histidine 114. The segment at residues 236 to 262 (YVNPEGPEGKPDPIAAAIDIRETFGRM) is a cross-link (tryptophyl-tyrosyl-methioninium (Tyr-Met) (with W-113)). Histidine 277 contacts heme b.

Belongs to the peroxidase family. Peroxidase/catalase subfamily. Homodimer or homotetramer. The cofactor is heme b. Formation of the three residue Trp-Tyr-Met cross-link is important for the catalase, but not the peroxidase activity of the enzyme.

The enzyme catalyses H2O2 + AH2 = A + 2 H2O. The catalysed reaction is 2 H2O2 = O2 + 2 H2O. Functionally, bifunctional enzyme with both catalase and broad-spectrum peroxidase activity. May play a role in the intracellular survival of mycobacteria. The chain is Catalase-peroxidase from Mycobacterium intracellulare.